The sequence spans 85 residues: Large ribosomal subunit protein bL27 (85 aa).

Residues 1–24 (MAHKKAGGSSRNGRDSNSKRLGVK) form a disordered region.

It belongs to the bacterial ribosomal protein bL27 family.

This chain is Large ribosomal subunit protein bL27, found in Nitrosospira multiformis (strain ATCC 25196 / NCIMB 11849 / C 71).